The following is a 306-amino-acid chain: MPELPEVETVKRGLAPTMEGALLVRAELRRPDLRFPFPENFEDAVAGRRIVALSRRAKYLTIELEGGDVIIAHLGMSGSFRIEFDGPGEGRIKESADPAVPGDFHRPRSKDEKHDHVVFHLDASCGPARVIYNDPRRFGFMALARREALAEHVFLRGLGEEPTGNALDAAYLAARFSGKAQPLKAALLDQRTIAGLGNIYVCEALWRSGLSPKRAAGTLVDKRARPKQALVQLTDAIRAVIADAIAAGGSSLKDHIQADGSLGYFQHSFSVYDREGEACRTSGCRGTVERIVQAGRSTFYCPHCQK.

Pro2 functions as the Schiff-base intermediate with DNA in the catalytic mechanism. The active-site Proton donor is Glu3. Lys58 serves as the catalytic Proton donor; for beta-elimination activity. The DNA site is built by His114, Arg136, and Lys179. Residues 270-306 (SVYDREGEACRTSGCRGTVERIVQAGRSTFYCPHCQK) form an FPG-type zinc finger. The active-site Proton donor; for delta-elimination activity is Arg296.

It belongs to the FPG family. Monomer. Zn(2+) serves as cofactor.

It catalyses the reaction Hydrolysis of DNA containing ring-opened 7-methylguanine residues, releasing 2,6-diamino-4-hydroxy-5-(N-methyl)formamidopyrimidine.. The enzyme catalyses 2'-deoxyribonucleotide-(2'-deoxyribose 5'-phosphate)-2'-deoxyribonucleotide-DNA = a 3'-end 2'-deoxyribonucleotide-(2,3-dehydro-2,3-deoxyribose 5'-phosphate)-DNA + a 5'-end 5'-phospho-2'-deoxyribonucleoside-DNA + H(+). Involved in base excision repair of DNA damaged by oxidation or by mutagenic agents. Acts as a DNA glycosylase that recognizes and removes damaged bases. Has a preference for oxidized purines, such as 7,8-dihydro-8-oxoguanine (8-oxoG). Has AP (apurinic/apyrimidinic) lyase activity and introduces nicks in the DNA strand. Cleaves the DNA backbone by beta-delta elimination to generate a single-strand break at the site of the removed base with both 3'- and 5'-phosphates. The protein is Formamidopyrimidine-DNA glycosylase of Sinorhizobium medicae (strain WSM419) (Ensifer medicae).